A 294-amino-acid chain; its full sequence is Taste receptor type 2 member 143 (294 aa).

Over 1–7 the chain is Extracellular; it reads MPSTPTL. Residues 8–28 traverse the membrane as a helical segment; the sequence is IFIVIFFLVSVASMLQNGFMI. Over 29–43 the chain is Cytoplasmic; it reads IVLGREWMRNRALPA. Residues 44–64 form a helical membrane-spanning segment; the sequence is VDMIVASLASSRFCLHGIAIL. Residues 65–80 lie on the Extracellular side of the membrane; it reads NNFLASFDFCYQANFV. The helical transmembrane segment at 81 to 101 threads the bilayer; sequence GILWDFINTLILWLTAWLAIF. Residues 102–128 are Cytoplasmic-facing; sequence YCVKISSFSHPVLFWLKWRISQLVPRL. Residues 129–149 traverse the membrane as a helical segment; the sequence is LLVSLIMGGLSAIISATGNII. Residues 150–180 are Extracellular-facing; the sequence is ANQMIISQGFHGNCTFGHMSLDFYRYYYLSH. N-linked (GlcNAc...) asparagine glycosylation occurs at N162. A helical membrane pass occupies residues 181 to 201; sequence AVLMWFTPFFLFLVSIIFLMF. The Cytoplasmic segment spans residues 202–227; the sequence is SLYRHVEKMRGHRPGPWDPRTQAHTM. The helical transmembrane segment at 228–248 threads the bilayer; that stretch reads ALKSLTVFITFYILFFLALII. Residues 249–260 are Extracellular-facing; it reads SSTKSKTMHSYW. The helical transmembrane segment at 261–281 threads the bilayer; that stretch reads YWVREIIIYTGIFLNSIILVL. Residues 282–294 are Cytoplasmic-facing; it reads SNPKLRKALKMRF.

Belongs to the G-protein coupled receptor T2R family.

The protein resides in the membrane. In terms of biological role, putative taste receptor which may play a role in the perception of bitterness. In Rattus norvegicus (Rat), this protein is Taste receptor type 2 member 143.